A 538-amino-acid polypeptide reads, in one-letter code: Atos homolog protein B (538 aa).

The span at 1 to 18 (MRHVQAEPSPSSEPEAGP) shows a compositional bias: low complexity. Disordered regions lie at residues 1–114 (MRHV…LGVA) and 133–300 (TSSW…VLDP). Residues 227-238 (HTPPGPGPPGPC) are compositionally biased toward pro residues. Phosphoserine is present on residues serine 254 and serine 255. The tract at residues 348–430 (LLGNFEESLL…VPKVGTVQVT (83 aa)) is required for macropage invasion. The interval 436 to 444 (QTVVKMFLV) is transactivation domain 1 (TAD1).

Belongs to the ATOS family.

The protein localises to the nucleus. Functionally, transcription regulator that may syncronize transcriptional and translational programs. The polypeptide is Atos homolog protein B (Homo sapiens (Human)).